A 254-amino-acid chain; its full sequence is Phosphoglycerate mutase 1 (254 aa).

Substrate is bound by residues 10–17 (RHGESTWN) and 23–24 (SG). The Tele-phosphohistidine intermediate role is filled by H11. A phosphoserine mark is found at S14 and S23. The residue at position 26 (Y26) is a Phosphotyrosine. S31 is modified (phosphoserine). Substrate is bound by residues R62, 89 to 92 (ERHY), and K100. E89 functions as the Proton donor/acceptor in the catalytic mechanism. Position 106 is an N6-acetyllysine (K106). 116-117 (RR) lines the substrate pocket. The residue at position 118 (S118) is a Phosphoserine. 187-188 (GN) contacts substrate. At K251 the chain carries N6-acetyllysine; alternate. An N6-succinyllysine; alternate modification is found at K251. N6-acetyllysine is present on residues K253 and K254.

It belongs to the phosphoglycerate mutase family. BPG-dependent PGAM subfamily. Homodimer. Post-translationally, acetylated at Lys-253, Lys-253 and Lys-254 under high glucose condition. Acetylation increases catalytic activity. Under glucose restriction SIRT1 levels dramatically increase and it deacetylates the enzyme.

The catalysed reaction is (2R)-2-phosphoglycerate = (2R)-3-phosphoglycerate. The enzyme catalyses (2R)-3-phospho-glyceroyl phosphate = (2R)-2,3-bisphosphoglycerate + H(+). Functionally, catalyzes the interconversion of 2-phosphoglycerate and 3-phosphoglyceratea crucial step in glycolysis, by using 2,3-bisphosphoglycerate. Also catalyzes the interconversion of (2R)-2,3-bisphosphoglycerate and (2R)-3-phospho-glyceroyl phosphate. This is Phosphoglycerate mutase 1 from Bos taurus (Bovine).